The chain runs to 118 residues: Non-specific lipid-transfer protein (118 aa).

The first 27 residues, 1–27 (MGVSKVAIAVAVMLMVVVINHPAVVEG), serve as a signal peptide directing secretion. Disulfide bonds link cysteine 30-cysteine 75, cysteine 40-cysteine 54, cysteine 55-cysteine 100, and cysteine 77-cysteine 114.

The protein belongs to the plant LTP family. In terms of processing, disulfide bonds.

Its function is as follows. Plant non-specific lipid-transfer proteins transfer phospholipids as well as galactolipids across membranes. May play a role in wax or cutin deposition in the cell walls of expanding epidermal cells and certain secretory tissues. This chain is Non-specific lipid-transfer protein, found in Apium graveolens (Celery).